The primary structure comprises 284 residues: D-tagatose-1,6-bisphosphate aldolase subunit GatY (284 aa).

The active-site Proton donor is the Asp82. Residues His83 and His180 each coordinate Zn(2+). Dihydroxyacetone phosphate is bound at residue Gly181. His208 contacts Zn(2+). Dihydroxyacetone phosphate contacts are provided by residues 209–211 and 230–233; these read GAS and NVAT.

This sequence belongs to the class II fructose-bisphosphate aldolase family. TagBP aldolase GatY subfamily. As to quaternary structure, forms a complex with GatZ. Zn(2+) is required as a cofactor.

It catalyses the reaction D-tagatofuranose 1,6-bisphosphate = D-glyceraldehyde 3-phosphate + dihydroxyacetone phosphate. Its pathway is carbohydrate metabolism; D-tagatose 6-phosphate degradation; D-glyceraldehyde 3-phosphate and glycerone phosphate from D-tagatose 6-phosphate: step 2/2. Functionally, catalytic subunit of the tagatose-1,6-bisphosphate aldolase GatYZ, which catalyzes the reversible aldol condensation of dihydroxyacetone phosphate (DHAP or glycerone-phosphate) with glyceraldehyde 3-phosphate (G3P) to produce tagatose 1,6-bisphosphate (TBP). Requires GatZ subunit for full activity and stability. Is involved in the catabolism of galactitol. In Escherichia coli (strain K12 / MC4100 / BW2952), this protein is D-tagatose-1,6-bisphosphate aldolase subunit GatY.